A 177-amino-acid polypeptide reads, in one-letter code: B9 domain-containing protein 2 (177 aa).

One can recognise a C2 B9-type domain in the interval 2 to 118; that stretch reads AEVHIIGQIL…EIGTWKVAPN (117 aa).

Belongs to the B9D family. Probable component of the tectonic-like complex (also named MKS complex), composed of B9d1, B9d2, Cc2d2a, Mks1 and tctn. In terms of tissue distribution, expressed in chordotonal neurons in the antennae (at protein level). Expressed in spermatids (at protein level).

It localises to the cytoplasm. It is found in the cytoskeleton. The protein localises to the cilium basal body. In terms of biological role, probable component of the tectonic-like complex (also named MKS complex), a complex localized at the transition zone of primary cilia. Has a role in ciliary structure and function. In Drosophila melanogaster (Fruit fly), this protein is B9 domain-containing protein 2.